A 190-amino-acid chain; its full sequence is Protein GrpE (190 aa).

The segment covering 1–26 (MADKEKDAVIVDETEHVDVDSKESKK) has biased composition (basic and acidic residues). The segment at 1–31 (MADKEKDAVIVDETEHVDVDSKESKKEKKTK) is disordered.

The protein belongs to the GrpE family. In terms of assembly, homodimer.

It localises to the cytoplasm. In terms of biological role, participates actively in the response to hyperosmotic and heat shock by preventing the aggregation of stress-denatured proteins, in association with DnaK and GrpE. It is the nucleotide exchange factor for DnaK and may function as a thermosensor. Unfolded proteins bind initially to DnaJ; upon interaction with the DnaJ-bound protein, DnaK hydrolyzes its bound ATP, resulting in the formation of a stable complex. GrpE releases ADP from DnaK; ATP binding to DnaK triggers the release of the substrate protein, thus completing the reaction cycle. Several rounds of ATP-dependent interactions between DnaJ, DnaK and GrpE are required for fully efficient folding. The protein is Protein GrpE of Acholeplasma laidlawii (strain PG-8A).